Here is a 332-residue protein sequence, read N- to C-terminus: DNA packaging protein (332 aa).

The interval 1–207 (MDKSLFYNPQ…SERRKTRFGR (207 aa)) is ATPase. 24-31 (GARGIGKS) serves as a coordination point for ATP. The DNA-binding stretch occupies residues 233–332 (KRSKDSKFVF…YELFRKMRIQ (100 aa)).

It belongs to the phi29likevirus gp16 family. In terms of assembly, homopentamer. Interacts with the packaging RNA (pRNA). Part of a DNA-gp3-gp16 complex.

It catalyses the reaction ATP + H2O = ADP + phosphate + H(+). In terms of biological role, ATPase required for the genome encapsidation reaction. Part of the active packaging motor via the binding to the packaging RNA (pRNA), itself fixed to the head-tail connector at the unique portal vertex of the prohead. Binds and supercoils the pre-formed, unit-length DNA bound to gp3 to produce an initiation complex for DNA packaging. Provides the energy to actively pump the viral DNA into the prohead. Approximately one molecule of ATP is used in the packaging of 2 bp of viral DNA. ATP hydrolysis results in a conformational change that causes the arginine/lysine finger of one subunit to move into the active site of its neighbor, where it interacts with the negatively charged oxygens on the gamma-phosphate of ATP. After packaging, the ATPase and the pRNA are released from the prohead. This Bacillus phage phi29 (Bacteriophage phi-29) protein is DNA packaging protein (16).